We begin with the raw amino-acid sequence, 133 residues long: Large ribosomal subunit protein uL22 (133 aa).

This sequence belongs to the universal ribosomal protein uL22 family. In terms of assembly, part of the 50S ribosomal subunit.

This protein binds specifically to 23S rRNA; its binding is stimulated by other ribosomal proteins, e.g. L4, L17, and L20. It is important during the early stages of 50S assembly. It makes multiple contacts with different domains of the 23S rRNA in the assembled 50S subunit and ribosome. Functionally, the globular domain of the protein is located near the polypeptide exit tunnel on the outside of the subunit, while an extended beta-hairpin is found that lines the wall of the exit tunnel in the center of the 70S ribosome. In Borrelia garinii subsp. bavariensis (strain ATCC BAA-2496 / DSM 23469 / PBi) (Borreliella bavariensis), this protein is Large ribosomal subunit protein uL22.